The primary structure comprises 496 residues: Chromosomal replication initiator protein DnaA (496 aa).

A domain I, interacts with DnaA modulators region spans residues 1-76 (MKMDSAVSEE…TELWQEENPQ (76 aa)). The segment at 76-150 (QILKVEVVVR…AAATDAVLGS (75 aa)) is domain II. Residues 151–373 (PLDPRYTFDT…GAFNQLLFRQ (223 aa)) form a domain III, AAA+ region region. ATP-binding residues include Gly197, Gly199, Lys200, and Thr201. Residues 374–496 (SFEPNISIDR…LKRLINDQAA (123 aa)) form a domain IV, binds dsDNA region.

The protein belongs to the DnaA family. Oligomerizes as a right-handed, spiral filament on DNA at oriC.

It is found in the cytoplasm. Its function is as follows. Plays an essential role in the initiation and regulation of chromosomal replication. ATP-DnaA binds to the origin of replication (oriC) to initiate formation of the DNA replication initiation complex once per cell cycle. Binds the DnaA box (a 9 base pair repeat at the origin) and separates the double-stranded (ds)DNA. Forms a right-handed helical filament on oriC DNA; dsDNA binds to the exterior of the filament while single-stranded (ss)DNA is stabiized in the filament's interior. The ATP-DnaA-oriC complex binds and stabilizes one strand of the AT-rich DNA unwinding element (DUE), permitting loading of DNA polymerase. After initiation quickly degrades to an ADP-DnaA complex that is not apt for DNA replication. Binds acidic phospholipids. The sequence is that of Chromosomal replication initiator protein DnaA from Brucella suis biovar 1 (strain 1330).